A 149-amino-acid polypeptide reads, in one-letter code: Transcriptional repressor NrdR (149 aa).

Residues 3–34 (CPFCAAEETKVVDSRLAADGYQIRRRRECTSC) fold into a zinc finger. In terms of domain architecture, ATP-cone spans 49–139 (PYVIKNNGNR…VYLSFDDIEE (91 aa)).

Belongs to the NrdR family. Zn(2+) serves as cofactor.

Its function is as follows. Negatively regulates transcription of bacterial ribonucleotide reductase nrd genes and operons by binding to NrdR-boxes. This is Transcriptional repressor NrdR from Actinobacillus pleuropneumoniae serotype 5b (strain L20).